A 248-amino-acid chain; its full sequence is 14-3-3 protein (248 aa).

2 coiled-coil regions span residues 13–33 (MAQL…MRKI) and 91–111 (RQKI…LLQE). An O-phospho-L-serine-binding site is contributed by 135–136 (RY). Threonine 214 is modified (phosphothreonine). Positions 237–248 (TDSAGDDNAEEK) match the Putative polyglycylation target motif (T/G)X0-1(D/E)X1-3-G(D/E)X1-2(gE)2-4, where X is polar or negatively charged amino acid, and gE is polyglycylated glutamine motif. A 5-glutamyl polyglycine modification is found at glutamate 246.

Belongs to the 14-3-3 family. Homodimer. Homodimerizes via N-terminal domains. Oligomerizes forming homotrimers, homotetramers and protein filaments. Oligomerization is hindered by polyglycylation in vivo. Interacts with a large number of both cytosolic and membrane proteins in trophozoites and encysting parasites. Interacts with a serine/threonine protein kinase GL50803_112076 (gCDC7). Component of a multiprotein complex containing gCDC7 and GL50803_94117 (gDBF4), a regulatory subunit of gCDC7, during both the trophozoite and encysting stages of the parasite. Interacts with fructose-bisphosphate aldolase GL50803_11043 (gFBA), pyruvate kinase GL50803_17143 (gPyk), acetyl-CoA synthetase GL50803_13608 (gACS), protein kinase GL50803_22165 (gSTE), DEAD box RNA helicase GL50803_34684 (gVASA) and Golgi/cell cycle associated protein GL50803_17472 (gGCCA). Interacts with actin. Interacts with both monomeric phosphorylated and unphosphorylated actin. The interaction is enhanced by phosphorylation of actin and inhibited by Rho GTPase Rac. Post-translationally, phosphorylated constitutively throughout the life cycle. Phosphorylation is very high in trophozoites and encysting cells of 12 hours. Phosphorylated during excystation. Phosphorylation promotes its binding to various target proteins and is critical for encystation process. Phosphorylation modification is not influenced by polyglycylation modification. Polyglycylated on a glutamate residue, resulting in polyglycine chain on the gamma-carboxyl group. Polyglycylated by the tubulin--tyrosine ligase-like protein GL50803_8456 (gTTLL3). The polyglycine chain is shortened by metallopeptidases of the M20 family, namely dipeptidases GL50803_15832 (gDIP1) and GL50803_8407 (gDIP2). The length of the polyglycine chain is developmental stage-dependent. In trophozoites, glycine residues range from 10 to 31, with the greatest occurrence of 21 residues. In 12 hour encystation stage, glycine residues range from 6 to 22, with the greatest occurrence of 10 residues. The differential rate of polyglycylation/deglycylation during the encystation process regulates the intracellular localization of this protein. Relocalizes partially from the cytoplasm inside the nuclei following the shortening of the polyglycine chain in encysting cells. Polyglycylation modification is not influenced by phosphorylation modification. Polyglycylation prevents oligomerization in vivo.

Its subcellular location is the cytoplasm. The protein resides in the cytoskeleton. The protein localises to the nucleus. It localises to the cell projection. It is found in the cilium. Its subcellular location is the flagellum. The protein resides in the spindle. The protein localises to the nucleus envelope. It localises to the endoplasmic reticulum. Adapter protein implicated in the regulation of a large spectrum of both general and specialized signaling pathways. Binds to a large number of partners, usually by recognition of a phosphoserine or phosphothreonine motif. Binding generally results in the modulation of the activity of the binding partner. Binds with varying affinity to various synthetic phosphopeptides having a consensus binding motif RSX(pS/pT)XP, called mode-1, where X is any residue and pS/pT is a phosphorylated serine/threonine, and to synthetic phosphopeptides having a consensus binding motif Xp(S/T)X1-2-COOH, called mode-3, in which the phosphorylated residue occupies the penultimate C-terminal position in the target protein, but does not bind to their unphosphorylated counterparts. Binds to synthetic human RAF1 phosphopeptides, but not to their unphosphorylated forms. Binds to difopein, a polypeptide containing a phosphorylation-independent binding motif. Involved in encystation. Involved in cell proliferation. Required for actin and tubulin cytoskeletal organization. Regulates actin filament formation and nuclear size. This is 14-3-3 protein from Giardia intestinalis (strain ATCC 50803 / WB clone C6) (Giardia lamblia).